Here is a 363-residue protein sequence, read N- to C-terminus: Probable aminomethyltransferase (363 aa).

Belongs to the GcvT family. As to quaternary structure, the glycine cleavage system is composed of four proteins: P, T, L and H.

It catalyses the reaction N(6)-[(R)-S(8)-aminomethyldihydrolipoyl]-L-lysyl-[protein] + (6S)-5,6,7,8-tetrahydrofolate = N(6)-[(R)-dihydrolipoyl]-L-lysyl-[protein] + (6R)-5,10-methylene-5,6,7,8-tetrahydrofolate + NH4(+). Functionally, the glycine cleavage system catalyzes the degradation of glycine. This Halobacterium salinarum (strain ATCC 29341 / DSM 671 / R1) protein is Probable aminomethyltransferase.